The sequence spans 1124 residues: Eukaryotic translation initiation factor 3 subunit A (1124 aa).

Positions Leu96–Ala124 form a coiled coil. Residues Ile317–Ser498 form the PCI domain. Basic and acidic residues-rich tracts occupy residues Glu812–Ala851 and Glu860–Pro883. The tract at residues Glu812–Arg1124 is disordered. Over residues Pro900–Ala910 the composition is skewed to low complexity. Basic and acidic residues-rich tracts occupy residues Pro928–Gly952, Arg960–Pro990, Pro1007–Gly1048, and Asp1063–Pro1100.

The protein belongs to the eIF-3 subunit A family. As to quaternary structure, component of the eukaryotic translation initiation factor 3 (eIF-3) complex.

It is found in the cytoplasm. RNA-binding component of the eukaryotic translation initiation factor 3 (eIF-3) complex, which is involved in protein synthesis of a specialized repertoire of mRNAs and, together with other initiation factors, stimulates binding of mRNA and methionyl-tRNAi to the 40S ribosome. The eIF-3 complex specifically targets and initiates translation of a subset of mRNAs involved in cell proliferation. This chain is Eukaryotic translation initiation factor 3 subunit A, found in Anopheles gambiae (African malaria mosquito).